The following is a 431-amino-acid chain: Glutamate--tRNA ligase 2 (431 aa).

A 'HIGH' region motif is present at residues 6–16 (PSPTGDMHIGN). The short motif at 235-239 (KMSKR) is the 'KMSKS' region element. Lys-238 is a binding site for ATP.

It belongs to the class-I aminoacyl-tRNA synthetase family. Glutamate--tRNA ligase type 1 subfamily. Monomer.

The protein resides in the cytoplasm. It carries out the reaction tRNA(Glu) + L-glutamate + ATP = L-glutamyl-tRNA(Glu) + AMP + diphosphate. Catalyzes the attachment of glutamate to tRNA(Glu) in a two-step reaction: glutamate is first activated by ATP to form Glu-AMP and then transferred to the acceptor end of tRNA(Glu). The sequence is that of Glutamate--tRNA ligase 2 from Campylobacter jejuni subsp. doylei (strain ATCC BAA-1458 / RM4099 / 269.97).